The primary structure comprises 53 residues: ATP synthase protein 8 (53 aa).

Residues 9 to 29 traverse the membrane as a helical segment; it reads WITSMLMFWISVSILFSTLWW.

Belongs to the ATPase protein 8 family. In terms of assembly, F-type ATPases have 2 components, CF(1) - the catalytic core - and CF(0) - the membrane proton channel.

It is found in the mitochondrion membrane. Mitochondrial membrane ATP synthase (F(1)F(0) ATP synthase or Complex V) produces ATP from ADP in the presence of a proton gradient across the membrane which is generated by electron transport complexes of the respiratory chain. F-type ATPases consist of two structural domains, F(1) - containing the extramembraneous catalytic core and F(0) - containing the membrane proton channel, linked together by a central stalk and a peripheral stalk. During catalysis, ATP synthesis in the catalytic domain of F(1) is coupled via a rotary mechanism of the central stalk subunits to proton translocation. Part of the complex F(0) domain. Minor subunit located with subunit a in the membrane. The chain is ATP synthase protein 8 (MT-ATP8) from Lumbricus terrestris (Common earthworm).